The primary structure comprises 448 residues: UPF0210 protein PAE3581 (448 aa).

It belongs to the UPF0210 family.

The polypeptide is UPF0210 protein PAE3581 (Pyrobaculum aerophilum (strain ATCC 51768 / DSM 7523 / JCM 9630 / CIP 104966 / NBRC 100827 / IM2)).